The chain runs to 370 residues: Cytochrome b (370 aa).

4 helical membrane passes run phenylalanine 25–valine 45, tryptophan 69–isoleucine 90, tryptophan 105–leucine 125, and phenylalanine 170–isoleucine 190. Positions 75 and 89 each coordinate heme b. 2 residues coordinate heme b: histidine 174 and histidine 188. Histidine 193 is a binding site for a ubiquinone. Transmembrane regions (helical) follow at residues tyrosine 218 to serine 238, leucine 280 to histidine 300, phenylalanine 312 to threonine 332, and phenylalanine 339 to proline 358.

It belongs to the cytochrome b family. The cytochrome bc1 complex contains 3 respiratory subunits (MT-CYB, CYC1 and UQCRFS1), 2 core proteins (UQCRC1 and UQCRC2) and probably 6 low-molecular weight proteins. Heme b is required as a cofactor.

Its subcellular location is the mitochondrion inner membrane. Its function is as follows. Component of the ubiquinol-cytochrome c reductase complex (complex III or cytochrome b-c1 complex) that is part of the mitochondrial respiratory chain. The b-c1 complex mediates electron transfer from ubiquinol to cytochrome c. Contributes to the generation of a proton gradient across the mitochondrial membrane that is then used for ATP synthesis. This Eunectes murinus (Green anaconda) protein is Cytochrome b (MT-CYB).